We begin with the raw amino-acid sequence, 858 residues long: Leucine--tRNA ligase (858 aa).

The 'HIGH' region signature appears at 42 to 52 (PYPSGNLHMGH). Polar residues predominate over residues 584–594 (NPNRSDSSRYI). The segment at 584–611 (NPNRSDSSRYIPSNLVDPNDPKDPETGE) is disordered. The 'KMSKS' region signature appears at 619-623 (TMSKS). Lysine 622 lines the ATP pocket.

It belongs to the class-I aminoacyl-tRNA synthetase family.

The protein resides in the cytoplasm. It carries out the reaction tRNA(Leu) + L-leucine + ATP = L-leucyl-tRNA(Leu) + AMP + diphosphate. This is Leucine--tRNA ligase from Cyanothece sp. (strain PCC 7425 / ATCC 29141).